The primary structure comprises 74 residues: Peptide BmKb2 (74 aa).

An N-terminal signal peptide occupies residues 1 to 22 (MEIKYLLTVFLVLLIVSDHCQA). Lys40 carries the post-translational modification Lysine amide. The propeptide occupies 46–74 (DLNGQIDHFKNFRKRDAELEELLSKLPIY).

Belongs to the non-disulfide-bridged peptide (NDBP) superfamily. Short antimicrobial peptide (group 4) family.

Its subcellular location is the secreted. It localises to the target cell membrane. In terms of biological role, antibacterial peptide. This peptide gene is up-regulated at the transcriptional level after the venom gland is challenged by Gram-positive bacteria. The sequence is that of Peptide BmKb2 from Olivierus martensii (Manchurian scorpion).